We begin with the raw amino-acid sequence, 706 residues long: Elongation factor G (706 aa).

The tr-type G domain maps to 8–290 (KRYRNIGIVA…GVIEYMPSPT (283 aa)). Residues 17–24 (AHVDAGKT), 88–92 (DTPGH), and 142–145 (NKMD) contribute to the GTP site.

This sequence belongs to the TRAFAC class translation factor GTPase superfamily. Classic translation factor GTPase family. EF-G/EF-2 subfamily.

The protein resides in the cytoplasm. Catalyzes the GTP-dependent ribosomal translocation step during translation elongation. During this step, the ribosome changes from the pre-translocational (PRE) to the post-translocational (POST) state as the newly formed A-site-bound peptidyl-tRNA and P-site-bound deacylated tRNA move to the P and E sites, respectively. Catalyzes the coordinated movement of the two tRNA molecules, the mRNA and conformational changes in the ribosome. This Chromohalobacter salexigens (strain ATCC BAA-138 / DSM 3043 / CIP 106854 / NCIMB 13768 / 1H11) protein is Elongation factor G.